The following is a 1425-amino-acid chain: B-cell CLL/lymphoma 9 protein (1425 aa).

Positions 1-172 are disordered; it reads MHPSNPKVRS…APEPISAQKT (172 aa). 2 stretches are compositionally biased toward polar residues: residues 7–21 and 34–48; these read KVRS…SSPK and MSPS…KFSN. Low complexity predominate over residues 54–63; it reads GSASQSQPSP. Over residues 78-94 the composition is skewed to gly residues; it reads GPGGSMGLKNGAGNGAK. 2 stretches are compositionally biased toward basic and acidic residues: residues 100 to 112 and 120 to 135; these read ERSI…DQRD and SDIK…KSQE. Ser-104 is modified (phosphoserine). A compositionally biased stretch (low complexity) spans 144 to 157; sequence TPSTATAPRSSTPS. At Ser-157 the chain carries Phosphoserine. A Phosphothreonine modification is found at Thr-172. Residues 177-205 form an interaction with PYGO1 region; that stretch reads VYVFSTEMANKAAEAVLKGQVETIVSFHI. Over residues 207–226 the composition is skewed to polar residues; sequence NISNSKSERSTAPLNTQIPT. 2 disordered regions span residues 207-441 and 577-624; these read NISN…VPFS and VPNP…PNPQ. Composition is skewed to pro residues over residues 232–241 and 256–270; these read KPLPQQPPAP and PTPP…PTAA. Polar residues predominate over residues 304–320; the sequence is GPNSTPNNRAVTPVSQG. Phosphothreonine is present on Thr-315. 2 positions are modified to phosphoserine: Ser-318 and Ser-352. Positions 355-380 are enriched in basic and acidic residues; the sequence is QLEHRERSLQTLRDIQRMLFPDEKEF. The interval 358–374 is interaction with CTNNB1; that stretch reads HRERSLQTLRDIQRMLF. Phosphoserine occurs at positions 686 and 688. Disordered stretches follow at residues 781-1003, 1031-1051, 1153-1199, and 1252-1275; these read RPFL…LSQN, VASS…SMNS, PHNG…GPGA, and PRGE…MQGM. Arg-800 is subject to Asymmetric dimethylarginine. The span at 822-835 shows a compositional bias: low complexity; the sequence is NPSSNPTSLSTAPP. The residue at position 843 (Lys-843) is an N6-acetyllysine. Positions 866-890 are enriched in polar residues; sequence TMHQVQSPMLGSPSGNLKSPQTPSQ. Residues 891 to 902 are compositionally biased toward low complexity; it reads LAGMLAGPAAAA. Phosphoserine occurs at positions 906 and 916. Pro residues predominate over residues 936-946; the sequence is PKPPLQSPGIP. A compositionally biased stretch (gly residues) spans 1157-1175; sequence PTGGQGNFPGGIGFPGEGP.

It belongs to the BCL9 family. In terms of assembly, binds to beta-catenin (CTNNB1), PYGO1 and PYGO2; the interaction with PYGO1 increases PYGO1 affinity to histone H3 methylated at 'Lys 4'.

The protein resides in the nucleus. Functionally, promotes beta-catenin's transcriptional activity. Involved in signal transduction through the Wnt pathway. The protein is B-cell CLL/lymphoma 9 protein (Bcl9) of Mus musculus (Mouse).